We begin with the raw amino-acid sequence, 458 residues long: 3-isopropylmalate dehydratase large subunit (458 aa).

[4Fe-4S] cluster-binding residues include C337, C397, and C400.

It belongs to the aconitase/IPM isomerase family. LeuC type 1 subfamily. As to quaternary structure, heterodimer of LeuC and LeuD. [4Fe-4S] cluster serves as cofactor.

The catalysed reaction is (2R,3S)-3-isopropylmalate = (2S)-2-isopropylmalate. The protein operates within amino-acid biosynthesis; L-leucine biosynthesis; L-leucine from 3-methyl-2-oxobutanoate: step 2/4. Its function is as follows. Catalyzes the isomerization between 2-isopropylmalate and 3-isopropylmalate, via the formation of 2-isopropylmaleate. The protein is 3-isopropylmalate dehydratase large subunit of Leuconostoc mesenteroides subsp. mesenteroides (strain ATCC 8293 / DSM 20343 / BCRC 11652 / CCM 1803 / JCM 6124 / NCDO 523 / NBRC 100496 / NCIMB 8023 / NCTC 12954 / NRRL B-1118 / 37Y).